A 429-amino-acid chain; its full sequence is Argininosuccinate lyase (429 aa).

It belongs to the lyase 1 family. Argininosuccinate lyase subfamily.

It localises to the cytoplasm. The catalysed reaction is 2-(N(omega)-L-arginino)succinate = fumarate + L-arginine. The protein operates within amino-acid biosynthesis; L-arginine biosynthesis; L-arginine from L-ornithine and carbamoyl phosphate: step 3/3. The protein is Argininosuccinate lyase of Pyrobaculum calidifontis (strain DSM 21063 / JCM 11548 / VA1).